A 470-amino-acid polypeptide reads, in one-letter code: O-acyltransferase pboC (470 aa).

Residues His-149 and Asp-386 each act as proton acceptor in the active site.

This sequence belongs to the plant acyltransferase family. Monomer.

Its pathway is secondary metabolite biosynthesis. In terms of biological role, O-acetyltransferase; part of the gene cluster that mediates the biosynthesis of protubonine B, a hydroxylated and diacetylated cyclo-L-Trp-L-Leu derivative. Within the pathway, pboC catalyzes the acetylation of protubonine D at the hydroxy group to produce protubonine C. The first step of the protubonine B synthesis is performed by the nonribosomal peptide synthetase pboA that catalyzes the formation of cyclo-L-Trp-L-Leu by condensing L-Leu with L-Trp. The flavin-dependent monooxygenase pboD is responsible for hydroxylation at C-3 of the indole ring and subsequent formation of the pyrrolidine ring, leadind to protubonine D. Protubonine D is further diacetylated by two acetyltransferases, pboB and pboC, to form the final product protubonine B via protubonine C. The protein is O-acyltransferase pboC of Aspergillus ustus.